Consider the following 741-residue polypeptide: Isocitrate dehydrogenase [NADP] (741 aa).

2 residues coordinate NADP(+): N85 and S87. The D-threo-isocitrate site is built by S132, N135, R139, R145, and K255. N135 contributes to the NADP(+) binding site. D350 is a binding site for Mn(2+). D-threo-isocitrate contacts are provided by Y420 and R547. Residue D548 coordinates Mn(2+). NADP(+) contacts are provided by S585, H589, R600, D602, and R649.

The protein belongs to the monomeric-type IDH family. Monomer. Mg(2+) serves as cofactor. It depends on Mn(2+) as a cofactor.

Its subcellular location is the cytoplasm. The enzyme catalyses D-threo-isocitrate + NADP(+) = 2-oxoglutarate + CO2 + NADPH. Activity is inhibited in the presence of Ca(2+). Its function is as follows. Catalyzes the oxidative decarboxylation of isocitrate to 2-oxoglutarate and carbon dioxide with the concomitant reduction of NADP(+). This chain is Isocitrate dehydrogenase [NADP], found in Azotobacter vinelandii.